The chain runs to 194 residues: dTTP/UTP pyrophosphatase (194 aa).

Catalysis depends on Asp76, which acts as the Proton acceptor.

It belongs to the Maf family. YhdE subfamily. A divalent metal cation serves as cofactor.

Its subcellular location is the cytoplasm. It catalyses the reaction dTTP + H2O = dTMP + diphosphate + H(+). The enzyme catalyses UTP + H2O = UMP + diphosphate + H(+). In terms of biological role, nucleoside triphosphate pyrophosphatase that hydrolyzes dTTP and UTP. May have a dual role in cell division arrest and in preventing the incorporation of modified nucleotides into cellular nucleic acids. This Shewanella oneidensis (strain ATCC 700550 / JCM 31522 / CIP 106686 / LMG 19005 / NCIMB 14063 / MR-1) protein is dTTP/UTP pyrophosphatase.